Consider the following 309-residue polypeptide: NAD kinase (309 aa).

Residue Asp89 is the Proton acceptor of the active site. NAD(+)-binding positions include Asp89–Gly90, Asn163–Glu164, His174, Arg191, Asp193, and Thr204–Ser209.

Belongs to the NAD kinase family. It depends on a divalent metal cation as a cofactor.

Its subcellular location is the cytoplasm. The enzyme catalyses NAD(+) + ATP = ADP + NADP(+) + H(+). Functionally, involved in the regulation of the intracellular balance of NAD and NADP, and is a key enzyme in the biosynthesis of NADP. Catalyzes specifically the phosphorylation on 2'-hydroxyl of the adenosine moiety of NAD to yield NADP. This is NAD kinase from Shewanella baltica (strain OS185).